Consider the following 147-residue polypeptide: Hemoglobin subunit beta (147 aa).

The Globin domain occupies 3–147; sequence EWTDFERATI…VVSSLGRQYH (145 aa). Heme b is bound by residues His64 and His93.

Belongs to the globin family. Hb 1 is a heterotetramer of two alpha-1 and two beta chains. Hb 2 is a heterotetramer of two alpha-2 and two beta chains. Red blood cells.

In terms of biological role, involved in oxygen transport from gills to the various peripheral tissues. This Cottoperca gobio (Frogmouth) protein is Hemoglobin subunit beta (hbb).